The chain runs to 134 residues: Pro-opiomelanocortin (134 aa).

Residue Ser1 is modified to N-acetylserine. Val13 carries the valine amide modification. Residue Ser31 is modified to Phosphoserine. Composition is skewed to basic and acidic residues over residues 43–52 (LARERPEPAR) and 79–104 (SAEK…DKRY). Positions 43–107 (LARERPEPAR…PAKDKRYGGF (65 aa)) are disordered.

Belongs to the POMC family. Specific enzymatic cleavages at paired basic residues yield the different active peptides. As to expression, ACTH and MSH are produced by the pituitary gland.

Its subcellular location is the secreted. Its function is as follows. Stimulates the adrenal glands to release cortisol. In terms of biological role, anorexigenic peptide. Increases the pigmentation of skin by increasing melanin production in melanocytes. Increases the pigmentation of skin by increasing melanin production in melanocytes. Functionally, endogenous orexigenic opiate. Its function is as follows. Endogenous opiate. The polypeptide is Pro-opiomelanocortin (POMC) (Loxodonta africana (African elephant)).